A 328-amino-acid polypeptide reads, in one-letter code: Tetraacyldisaccharide 4'-kinase (328 aa).

ATP is bound at residue 55–62; the sequence is TVGGNGKT.

The protein belongs to the LpxK family.

It catalyses the reaction a lipid A disaccharide + ATP = a lipid IVA + ADP + H(+). Its pathway is glycolipid biosynthesis; lipid IV(A) biosynthesis; lipid IV(A) from (3R)-3-hydroxytetradecanoyl-[acyl-carrier-protein] and UDP-N-acetyl-alpha-D-glucosamine: step 6/6. Functionally, transfers the gamma-phosphate of ATP to the 4'-position of a tetraacyldisaccharide 1-phosphate intermediate (termed DS-1-P) to form tetraacyldisaccharide 1,4'-bis-phosphate (lipid IVA). The chain is Tetraacyldisaccharide 4'-kinase from Hamiltonella defensa subsp. Acyrthosiphon pisum (strain 5AT).